The following is a 532-amino-acid chain: Metal-staphylopine-binding protein CntA (532 aa).

A signal peptide spans 1-20; sequence MRKLTKMSAMLLASGLILTG. A lipid anchor (N-palmitoyl cysteine) is attached at Cys21. Residue Cys21 is the site of S-diacylglycerol cysteine attachment. Residues Arg165, Arg418, and Asn448 each contribute to the staphylopine site.

The protein belongs to the bacterial solute-binding protein 5 family. In terms of assembly, the complex is composed of two ATP-binding proteins (CntD and CntF), two transmembrane proteins (CntB and CntC) and a solute-binding protein (CntA).

It is found in the cell membrane. Functionally, part of the ABC transporter complex CntABCDF (Opp1) involved in the uptake of metal in complex with the metallophore staphylopine (StP). May be involved in the import of a large array of divalent metals ions such as nickel, cobalt, zinc, copper and iron. Binds the metal via the metallophore StP, and transfers the StP-metal complex to the membrane-bound permease. The sequence is that of Metal-staphylopine-binding protein CntA from Staphylococcus aureus (strain Mu50 / ATCC 700699).